Reading from the N-terminus, the 152-residue chain is Deoxyuridine 5'-triphosphate nucleotidohydrolase (152 aa).

Substrate-binding positions include 71–73 (RSG), N84, 88–90 (LID), and M98.

Belongs to the dUTPase family. The cofactor is Mg(2+).

It carries out the reaction dUTP + H2O = dUMP + diphosphate + H(+). The protein operates within pyrimidine metabolism; dUMP biosynthesis; dUMP from dCTP (dUTP route): step 2/2. This enzyme is involved in nucleotide metabolism: it produces dUMP, the immediate precursor of thymidine nucleotides and it decreases the intracellular concentration of dUTP so that uracil cannot be incorporated into DNA. The sequence is that of Deoxyuridine 5'-triphosphate nucleotidohydrolase from Enterobacter sp. (strain 638).